A 405-amino-acid chain; its full sequence is Argininosuccinate synthase (405 aa).

Residues 10–18 (AYSGGLDTS) and Ala37 each bind ATP. Tyr88 and Ser93 together coordinate L-citrulline. Gly118 contacts ATP. The L-aspartate site is built by Thr120, Asn124, and Asp125. Residue Asn124 coordinates L-citrulline. Residues Arg128, Ser179, Ser188, Glu264, and Tyr276 each coordinate L-citrulline.

This sequence belongs to the argininosuccinate synthase family. Type 1 subfamily. As to quaternary structure, homotetramer.

The protein localises to the cytoplasm. It carries out the reaction L-citrulline + L-aspartate + ATP = 2-(N(omega)-L-arginino)succinate + AMP + diphosphate + H(+). Its pathway is amino-acid biosynthesis; L-arginine biosynthesis; L-arginine from L-ornithine and carbamoyl phosphate: step 2/3. The protein is Argininosuccinate synthase of Pseudomonas putida (strain GB-1).